A 178-amino-acid polypeptide reads, in one-letter code: MQDVQRTVEVSVGPIVGLDYTLLYDTLPETVSDNITLPDLKDPERVTEDTKKLILKGCVYIAYHHPLETDTLFIKVHKHITEFCHSFLSHLLGGEDDDNALIDIGLFFNMLQPSLGGWITKNFLRHPNRMSKDQIKLLLDQIIKMAKAESSDTEEYEKVWKKMPTYFESIIQPLLHKT.

It belongs to the tenuiviruses NCP family.

It is found in the host cytoplasm. In terms of biological role, induces the formation of large intracellular inclusion body, organized in amorphous and crystalline arrays. Presumably the main cause of the stripe disease observed in host. The sequence is that of Major non-capsid protein from Avena sativa (Oat).